Consider the following 154-residue polypeptide: Transcriptional repressor NrdR (154 aa).

The segment at 3 to 34 is a zinc-finger region; that stretch reads CPFCAHPDTRVADSRLMEERNAVRRRRHCPNC. Residues 49–139 enclose the ATP-cone domain; the sequence is PAVIGPDKKR…LHKRFDNPAD (91 aa).

Belongs to the NrdR family. It depends on Zn(2+) as a cofactor.

Functionally, negatively regulates transcription of bacterial ribonucleotide reductase nrd genes and operons by binding to NrdR-boxes. This Neisseria meningitidis serogroup B (strain ATCC BAA-335 / MC58) protein is Transcriptional repressor NrdR.